The sequence spans 858 residues: MDLKAQSIPFAWLDRDKVQRLTNFLSNLENLENVDLREHPYVTNSCVVREGEDVDELKTLYNTFILWLMYHYVLSKRKPDYNAIWQDITKLQNVVNEYLKSKGLNKGNFENMFTNKEKFESQFSDIHRALLRLGNSIRWGSNVPIDTPYVNLTAEDSSEIENNLQDAEKNMLWYTVYNINDPWDENGYLVTSINKLVYLGKLFVTLNQSWSKLEKVAMSQIVTTQNHLSGHLRKNENFNAVYSQRVLQTPLTGQRVESFLKIITSDYEIIKSSLESYSASKAFSVPENGPHSLMDFASLDGRMPSDLSLPSISIDTKRPSADLARLKISQPKSLDAPLKTQRRHKFPESDSVDNAGGKILIKKETLGGRDVRATTPVSSVSLMSGVEPLSSLTSTNLDLRDKSHGNYRIGPSGILDFGVKLPAEAQSNTGDVDLLQDKTSIRSPSSGITDVVNGLANLNLRQNKSDVSRPWSKNTAANADVFDPVHRLVSEQTGTPFVLNNSDVAGSEAKLTTHSTETGVSPHNVSLIKDLRDKDGFRKQKKLDLLGSWTKEKNDKAIVHSREVTGDSGDATETVTARDSPVLRKTKHANDIFAGLNKKYARDVSRGGKGNSRDLYSGGNAEKKETSGKFNVDKEMTQNEQEPLPNLMEAARNAGEEQYVQAGLGQRVNKILAEFTNLISLGEKGIQDILHNQSGTELKLPTENKLGRESEEANVERILEVSDPQNLFKNFKLQNDLDSVQSPFRLPNADLSRDLDSVSFKDALDVKLPGNGEREIDLALQKVKAGERETSDFKVGQDETLIPTQLMKVETPEEKDDVIEKMVLRIRQDGETDEETVPGPGVAESLGIAAKDKSVIAS.

Residues aspartate 603–lysine 629 form a disordered region.

It belongs to the herpesviridae large structural phosphoprotein family. As to quaternary structure, homotetramer. Interacts with the major capsid protein. 180 tegument protein pU11 tetramers bind to the virion capsid. In terms of processing, phosphorylated at multiple sites.

Its subcellular location is the virion tegument. In Homo sapiens (Human), this protein is Large structural phosphoprotein (U11).